Reading from the N-terminus, the 487-residue chain is MLTEQPNWLIQRAQLTPERIALIFENKQMTFRELYHASKQMAARLSKYCSLKKGDRAAILLSNRPEMVYAVHACFLLGAEAVLLNTKLSKQERLFQLEDSQAKLLLMEDGFCREEYESAVATADVDELQAEEAGDIEPEAYVTLDDTATLMYTSGTTGRPKGVQQTFGNHYSSAVSSALNLGVTERDRWLIALPLFHISGLSALFKSVIYGMPVVLHQKFSVTDVLDSISSHQVTIISAVQTMLSGLLAETEQCPESLRCILLGGGPAPLPLLEECRRKQFPVFQSYGLTETCSQIVTLSPEFSMDKLGSAGKPLFSCEIRIEKDGNPCAPFEHGEITVKGPNVMKGYYHRDDANQAAFHNGWFKTGDLGYLDDEGFLYVLDRRSDLIISGGENIYPAEVEAALLAHPAVAEAGVSGSEDPKWGKVPHAFLVLTSSVSSEELTAFCRERLAKYKIPAAFFEVDGLPRNASNKLMRHRLNELRKGELS.

It belongs to the ATP-dependent AMP-binding enzyme family. MenE subfamily.

The catalysed reaction is 2-succinylbenzoate + ATP + CoA = 2-succinylbenzoyl-CoA + AMP + diphosphate. It functions in the pathway quinol/quinone metabolism; 1,4-dihydroxy-2-naphthoate biosynthesis; 1,4-dihydroxy-2-naphthoate from chorismate: step 5/7. The protein operates within quinol/quinone metabolism; menaquinone biosynthesis. Converts 2-succinylbenzoate (OSB) to 2-succinylbenzoyl-CoA (OSB-CoA). This chain is 2-succinylbenzoate--CoA ligase, found in Bacillus velezensis (strain DSM 23117 / BGSC 10A6 / LMG 26770 / FZB42) (Bacillus amyloliquefaciens subsp. plantarum).